A 281-amino-acid polypeptide reads, in one-letter code: Ribosomal protein L11 methyltransferase (281 aa).

The S-adenosyl-L-methionine site is built by T131, G152, D174, and N217.

It belongs to the methyltransferase superfamily. PrmA family.

The protein localises to the cytoplasm. It carries out the reaction L-lysyl-[protein] + 3 S-adenosyl-L-methionine = N(6),N(6),N(6)-trimethyl-L-lysyl-[protein] + 3 S-adenosyl-L-homocysteine + 3 H(+). Methylates ribosomal protein L11. The polypeptide is Ribosomal protein L11 methyltransferase (Phocaeicola vulgatus (strain ATCC 8482 / DSM 1447 / JCM 5826 / CCUG 4940 / NBRC 14291 / NCTC 11154) (Bacteroides vulgatus)).